Here is a 294-residue protein sequence, read N- to C-terminus: 4-hydroxy-tetrahydrodipicolinate synthase (294 aa).

Residue T47 participates in pyruvate binding. The active-site Proton donor/acceptor is the Y135. K163 (schiff-base intermediate with substrate) is an active-site residue. Pyruvate is bound at residue T205.

This sequence belongs to the DapA family. Homotetramer; dimer of dimers.

The protein localises to the cytoplasm. It carries out the reaction L-aspartate 4-semialdehyde + pyruvate = (2S,4S)-4-hydroxy-2,3,4,5-tetrahydrodipicolinate + H2O + H(+). It functions in the pathway amino-acid biosynthesis; L-lysine biosynthesis via DAP pathway; (S)-tetrahydrodipicolinate from L-aspartate: step 3/4. Catalyzes the condensation of (S)-aspartate-beta-semialdehyde [(S)-ASA] and pyruvate to 4-hydroxy-tetrahydrodipicolinate (HTPA). In Rickettsia montanensis, this protein is 4-hydroxy-tetrahydrodipicolinate synthase.